A 505-amino-acid chain; its full sequence is Lysine--tRNA ligase (505 aa).

Residues glutamate 415 and glutamate 422 each coordinate Mg(2+).

This sequence belongs to the class-II aminoacyl-tRNA synthetase family. In terms of assembly, homodimer. Mg(2+) serves as cofactor.

The protein localises to the cytoplasm. It catalyses the reaction tRNA(Lys) + L-lysine + ATP = L-lysyl-tRNA(Lys) + AMP + diphosphate. This chain is Lysine--tRNA ligase (lysS), found in Salmonella typhimurium (strain LT2 / SGSC1412 / ATCC 700720).